Here is a 166-residue protein sequence, read N- to C-terminus: uncharacterized protein (166 aa).

Transmembrane regions (helical) follow at residues 7–27 (VLFKISFLLIILVSLILSLFY), 30–50 (FLFAFLLSFILFGITWAYCYI), 69–89 (IETLRFLFILMIISVFIKSLL), and 92–112 (NSFFPYISFLLSNLILGLVLF).

It to M.jannaschii MJ0795.1 and MJ0785.1.

The protein resides in the cell membrane. This is an uncharacterized protein from Methanocaldococcus jannaschii (strain ATCC 43067 / DSM 2661 / JAL-1 / JCM 10045 / NBRC 100440) (Methanococcus jannaschii).